A 142-amino-acid chain; its full sequence is Transcription antitermination protein NusB (142 aa).

It belongs to the NusB family.

Functionally, involved in transcription antitermination. Required for transcription of ribosomal RNA (rRNA) genes. Binds specifically to the boxA antiterminator sequence of the ribosomal RNA (rrn) operons. The polypeptide is Transcription antitermination protein NusB (Roseiflexus sp. (strain RS-1)).